Consider the following 116-residue polypeptide: NADH-ubiquinone oxidoreductase chain 3 (116 aa).

The next 3 helical transmembrane spans lie at 3–23 (LITTIIAITITLSAVLATVSF), 56–76 (FFLIAILFLLFDLEIALLLPL), and 85–105 (PALTLAWSAAVLALLTLGLIY).

The protein belongs to the complex I subunit 3 family.

The protein resides in the mitochondrion membrane. It catalyses the reaction a ubiquinone + NADH + 5 H(+)(in) = a ubiquinol + NAD(+) + 4 H(+)(out). Its function is as follows. Core subunit of the mitochondrial membrane respiratory chain NADH dehydrogenase (Complex I) that is believed to belong to the minimal assembly required for catalysis. Complex I functions in the transfer of electrons from NADH to the respiratory chain. The immediate electron acceptor for the enzyme is believed to be ubiquinone. This Salmo trutta (Brown trout) protein is NADH-ubiquinone oxidoreductase chain 3 (MT-ND3).